A 362-amino-acid chain; its full sequence is Exopolygalacturonase (362 aa).

PbH1 repeat units lie at residues 138 to 164 (CKNLTFERFKISAAETSINTDGIHIGR), 165 to 186 (SDGVNIINTEIKTGDDCISLGD), 188 to 208 (SKNINITNITCGPGHGISVGS), and 218 to 239 (VVGIYVKNCTITGSQNGVRIKT). An N-linked (GlcNAc...) asparagine glycan is attached at Asn140. The active-site Proton donor is Asp179. N-linked (GlcNAc...) asparagine glycosylation is found at Asn192 and Asn195. The active site involves His202. N-linked (GlcNAc...) asparagine glycosylation is present at Asn225.

Belongs to the glycosyl hydrolase 28 family. As to expression, pollen tubes growing through the style during pollination.

It is found in the secreted. The protein resides in the cell wall. It carries out the reaction [(1-&gt;4)-alpha-D-galacturonosyl](n) + H2O = alpha-D-galacturonate + [(1-&gt;4)-alpha-D-galacturonosyl](n-1). May function in depolymerizing pectin during pollen development, germination, and tube growth. Acts as an exo-polygalacturonase. This Oenothera organensis (Evening primrose) protein is Exopolygalacturonase.